Consider the following 173-residue polypeptide: ATP synthase subunit beta, mitochondrial (173 aa).

Belongs to the ATPase alpha/beta chains family. F-type ATPases have 2 components, CF(1) - the catalytic core - and CF(0) - the membrane proton channel. CF(1) has five subunits: alpha(3), beta(3), gamma(1), delta(1), epsilon(1). CF(0) has three main subunits: a, b and c.

It localises to the mitochondrion. Its subcellular location is the mitochondrion inner membrane. It catalyses the reaction ATP + H2O + 4 H(+)(in) = ADP + phosphate + 5 H(+)(out). In terms of biological role, mitochondrial membrane ATP synthase (F(1)F(0) ATP synthase or Complex V) produces ATP from ADP in the presence of a proton gradient across the membrane which is generated by electron transport complexes of the respiratory chain. F-type ATPases consist of two structural domains, F(1) - containing the extramembraneous catalytic core and F(0) - containing the membrane proton channel, linked together by a central stalk and a peripheral stalk. During catalysis, ATP synthesis in the catalytic domain of F(1) is coupled via a rotary mechanism of the central stalk subunits to proton translocation. Subunits alpha and beta form the catalytic core in F(1). Rotation of the central stalk against the surrounding alpha(3)beta(3) subunits leads to hydrolysis of ATP in three separate catalytic sites on the beta subunits. This Actinidia deliciosa (Kiwi) protein is ATP synthase subunit beta, mitochondrial (ATPB).